We begin with the raw amino-acid sequence, 317 residues long: SURF1-like protein (317 aa).

A run of 2 helical transmembrane segments spans residues 78-98 and 293-313; these read GSIL…WQIY and HMNY…MWIH.

The protein belongs to the SURF1 family.

It is found in the mitochondrion inner membrane. In terms of biological role, probably involved in the biogenesis of the COX complex. This chain is SURF1-like protein (sft-1), found in Caenorhabditis briggsae.